The sequence spans 298 residues: CD-NTase-associated protein 6 (298 aa).

Residues 80–85 and 204–205 each bind ATP; these read GTGKTA and RR.

This sequence belongs to the AAA ATPase family. As to quaternary structure, homohexamer, forms a 1:1:6 CdnC:Cap7:Cap6 complex.

In terms of biological role, regulates complex assembly in a CBASS antivirus system. CBASS (cyclic oligonucleotide-based antiphage signaling system) provides immunity against bacteriophage. The CD-NTase protein synthesizes cyclic nucleotides in response to infection; these serve as specific second messenger signals. The signals activate a diverse range of effectors, leading to bacterial cell death and thus abortive phage infection. A type III CBASS system. Expression of this CBASS system (Cap18-Cap6-Cap7-CdnC-CapW-Cap17) in a susceptible E.coli (strain MG1655) confers resistance to bacteriophage P1. Binds and disassembles an active CdnC:Cap7 complex, inhibiting the complex's ability to synthesize cyclic nucleotide second messengers. An AAA+-ATPase remodeler, in the absence of foreign threat Cap6 probably maintains the Cap7 protein in its open, inactive state. Once activated (presumably by a bacteriophage protein) Cap7 binds to and activates its cognate CD-NTase (CdnC in this bacteria) to synthesize a cyclic nucleotide second messenger which leads to abortive phage infection. This chain is CD-NTase-associated protein 6, found in Escherichia coli (strain KTE188).